A 700-amino-acid chain; its full sequence is Elongation factor G 2 (700 aa).

Positions E8–I290 constitute a tr-type G domain. GTP-binding positions include A17–T24, D88–H92, and N142–D145.

It belongs to the TRAFAC class translation factor GTPase superfamily. Classic translation factor GTPase family. EF-G/EF-2 subfamily.

It is found in the cytoplasm. Its function is as follows. Catalyzes the GTP-dependent ribosomal translocation step during translation elongation. During this step, the ribosome changes from the pre-translocational (PRE) to the post-translocational (POST) state as the newly formed A-site-bound peptidyl-tRNA and P-site-bound deacylated tRNA move to the P and E sites, respectively. Catalyzes the coordinated movement of the two tRNA molecules, the mRNA and conformational changes in the ribosome. This Paraburkholderia xenovorans (strain LB400) protein is Elongation factor G 2.